A 332-amino-acid polypeptide reads, in one-letter code: Biotin synthase (332 aa).

The Radical SAM core domain maps to 53–283 (WGKGGIHACS…VHPHSIIKFA (231 aa)). [4Fe-4S] cluster-binding residues include Cys71, Cys75, and Cys78. Residues Cys150, Cys211, and Lys281 each contribute to the [2Fe-2S] cluster site.

The protein belongs to the radical SAM superfamily. Biotin synthase family. In terms of assembly, homodimer. The cofactor is [4Fe-4S] cluster. [2Fe-2S] cluster serves as cofactor.

It carries out the reaction (4R,5S)-dethiobiotin + (sulfur carrier)-SH + 2 reduced [2Fe-2S]-[ferredoxin] + 2 S-adenosyl-L-methionine = (sulfur carrier)-H + biotin + 2 5'-deoxyadenosine + 2 L-methionine + 2 oxidized [2Fe-2S]-[ferredoxin]. It participates in cofactor biosynthesis; biotin biosynthesis; biotin from 7,8-diaminononanoate: step 2/2. In terms of biological role, catalyzes the conversion of dethiobiotin (DTB) to biotin by the insertion of a sulfur atom into dethiobiotin via a radical-based mechanism. The sequence is that of Biotin synthase from Chlorobium phaeovibrioides (strain DSM 265 / 1930) (Prosthecochloris vibrioformis (strain DSM 265)).